Reading from the N-terminus, the 122-residue chain is Large ribosomal subunit protein uL18 (122 aa).

Belongs to the universal ribosomal protein uL18 family. In terms of assembly, part of the 50S ribosomal subunit; part of the 5S rRNA/L5/L18/L25 subcomplex. Contacts the 5S and 23S rRNAs.

Its function is as follows. This is one of the proteins that bind and probably mediate the attachment of the 5S RNA into the large ribosomal subunit, where it forms part of the central protuberance. The protein is Large ribosomal subunit protein uL18 of Synechococcus sp. (strain JA-2-3B'a(2-13)) (Cyanobacteria bacterium Yellowstone B-Prime).